The primary structure comprises 111 residues: Putative single-stranded DNA-binding protein ycf41 (111 aa).

Residues 1 to 98 (MNSCTLLVQI…FSTSRIFKYK (98 aa)) form the SSB domain.

The protein resides in the plastid. It is found in the chloroplast. The chain is Putative single-stranded DNA-binding protein ycf41 (ycf41) from Pyropia yezoensis (Susabi-nori).